Consider the following 82-residue polypeptide: MTIFNSISSISNSTRITSSSISTYNYNGSMANVNSTACFDNDFGGWGGLGGFNNGCGGCGGGSNVNVINFDIDIGRRHRRCC.

Belongs to the UPF0512 family.

The chain is UPF0512 protein P from Dictyostelium discoideum (Social amoeba).